A 473-amino-acid polypeptide reads, in one-letter code: Rop guanine nucleotide exchange factor 3 (473 aa).

A disordered region spans residues 1 to 28 (MENLSNPDENDDHQSPRSIDQNDQSAVE). Residues 16–28 (PRSIDQNDQSAVE) show a composition bias toward polar residues. Residues 95 to 473 (LVVQEISEPE…YVDKTMRGSE (379 aa)) enclose the PRONE domain.

Functionally, guanine-nucleotide exchange factor (GEF) that acts as an activator of Rop (Rho of plants) GTPases by promoting the exchange of GDP for GTP. The sequence is that of Rop guanine nucleotide exchange factor 3 (ROPGEF3) from Arabidopsis thaliana (Mouse-ear cress).